The sequence spans 157 residues: Capsid protein (157 aa).

S2 is subject to N-acetylserine; by host.

This sequence belongs to the virgaviridae capsid protein family.

It is found in the virion. Its function is as follows. Capsid protein self-assembles to form rod-shaped virions about 18 nm in diameter with a central canal enclosing the viral genomic RNA. The chain is Capsid protein (CP) from Brassicaceae (TVCV).